The following is a 268-amino-acid chain: 3-methyl-2-oxobutanoate hydroxymethyltransferase (268 aa).

Mg(2+) contacts are provided by Asp-44 and Asp-83. Residues 44–45, Asp-83, and Lys-113 each bind 3-methyl-2-oxobutanoate; that span reads DS. Glu-115 provides a ligand contact to Mg(2+). Glu-183 (proton acceptor) is an active-site residue.

It belongs to the PanB family. Homodecamer; pentamer of dimers. The cofactor is Mg(2+).

It is found in the cytoplasm. The enzyme catalyses 3-methyl-2-oxobutanoate + (6R)-5,10-methylene-5,6,7,8-tetrahydrofolate + H2O = 2-dehydropantoate + (6S)-5,6,7,8-tetrahydrofolate. It functions in the pathway cofactor biosynthesis; (R)-pantothenate biosynthesis; (R)-pantoate from 3-methyl-2-oxobutanoate: step 1/2. Its function is as follows. Catalyzes the reversible reaction in which hydroxymethyl group from 5,10-methylenetetrahydrofolate is transferred onto alpha-ketoisovalerate to form ketopantoate. The polypeptide is 3-methyl-2-oxobutanoate hydroxymethyltransferase (Leptospira biflexa serovar Patoc (strain Patoc 1 / Ames)).